The following is an 81-amino-acid chain: MSHFVKIYDTCIGCTQCVRACPTDVLEMIPWDRCKAKQIASAPRTEDCVGCKRCESACPTDFLSVRVYLGRETTRSMGLAY.

4Fe-4S ferredoxin-type domains are found at residues 2–31 (SHFV…MIPW) and 39–68 (IASA…VRVY). The [4Fe-4S] cluster site is built by Cys11, Cys14, Cys17, Cys21, Cys48, Cys51, Cys54, and Cys58.

In terms of assembly, the eukaryotic PSI reaction center is composed of at least 11 subunits. It depends on [4Fe-4S] cluster as a cofactor.

It is found in the plastid thylakoid membrane. It carries out the reaction reduced [plastocyanin] + hnu + oxidized [2Fe-2S]-[ferredoxin] = oxidized [plastocyanin] + reduced [2Fe-2S]-[ferredoxin]. Apoprotein for the two 4Fe-4S centers FA and FB of photosystem I (PSI); essential for photochemical activity. FB is the terminal electron acceptor of PSI, donating electrons to ferredoxin. The C-terminus interacts with PsaA/B/D and helps assemble the protein into the PSI complex. Required for binding of PsaD and PsaE to PSI. PSI is a plastocyanin-ferredoxin oxidoreductase, converting photonic excitation into a charge separation, which transfers an electron from the donor P700 chlorophyll pair to the spectroscopically characterized acceptors A0, A1, FX, FA and FB in turn. In Cuscuta exaltata (Tall dodder), this protein is Photosystem I iron-sulfur center.